A 302-amino-acid polypeptide reads, in one-letter code: Alpha-ketoglutarate-dependent dioxygenase alkB homolog 4 (302 aa).

A2 is subject to N-acetylalanine. T8 carries the phosphothreonine modification. The 125-residue stretch at 150 to 274 folds into the Fe2OG dioxygenase domain; sequence PVEQCNLDYC…RVCVTFRELS (125 aa). Positions 169, 171, and 254 each coordinate Fe cation. Residue R265 participates in 2-oxoglutarate binding.

The protein belongs to the alkB family. Interacts with ZFHX3, MLLT3, MLLT1, HSF4, EP300, TES, EIF3C, MTMR6 and PSMA6. Requires Fe(2+) as cofactor. In terms of tissue distribution, widely expressed, with highest expression in pancreas, ovary and spleen.

The protein resides in the cytoplasm. It is found in the nucleus. The protein localises to the nucleolus. Its subcellular location is the midbody. It carries out the reaction an N(6)-methyl-2'-deoxyadenosine in DNA + 2-oxoglutarate + O2 = a 2'-deoxyadenosine in DNA + formaldehyde + succinate + CO2. The catalysed reaction is N(6)-methyl-L-lysyl-[protein] + 2-oxoglutarate + O2 = L-lysyl-[protein] + formaldehyde + succinate + CO2. Its function is as follows. Dioxygenase that mediates demethylation of actin monomethylated at 'Lys-84' (K84me1), thereby acting as a regulator of actomyosin-processes. Demethylation of actin K84me1 is required for maintaining actomyosin dynamics supporting normal cleavage furrow ingression during cytokinesis and cell migration. In addition to proteins, also demethylates DNA: specifically demethylates DNA methylated on the 6th position of adenine (N(6)-methyladenosine) DNA, thereby regulating Polycomb silencing. The protein is Alpha-ketoglutarate-dependent dioxygenase alkB homolog 4 of Homo sapiens (Human).